The primary structure comprises 346 residues: Biotin synthase (346 aa).

The 219-residue stretch at 38 to 256 (RQVQVSTLLS…IAVARIMMPT (219 aa)) folds into the Radical SAM core domain. Positions 53, 57, and 60 each coordinate [4Fe-4S] cluster. [2Fe-2S] cluster contacts are provided by cysteine 97, cysteine 128, cysteine 188, and arginine 260.

Belongs to the radical SAM superfamily. Biotin synthase family. In terms of assembly, homodimer. It depends on [4Fe-4S] cluster as a cofactor. [2Fe-2S] cluster is required as a cofactor.

The catalysed reaction is (4R,5S)-dethiobiotin + (sulfur carrier)-SH + 2 reduced [2Fe-2S]-[ferredoxin] + 2 S-adenosyl-L-methionine = (sulfur carrier)-H + biotin + 2 5'-deoxyadenosine + 2 L-methionine + 2 oxidized [2Fe-2S]-[ferredoxin]. It functions in the pathway cofactor biosynthesis; biotin biosynthesis; biotin from 7,8-diaminononanoate: step 2/2. Its function is as follows. Catalyzes the conversion of dethiobiotin (DTB) to biotin by the insertion of a sulfur atom into dethiobiotin via a radical-based mechanism. The sequence is that of Biotin synthase from Cronobacter sakazakii (strain ATCC BAA-894) (Enterobacter sakazakii).